The following is a 300-amino-acid chain: Type II methyltransferase M.XycI (300 aa).

Residues 109–129 (RGYRAPDKKNPARAMDVRPDT) form a disordered region. Residues 112–127 (RAPDKKNPARAMDVRP) show a composition bias toward basic and acidic residues.

Belongs to the N(4)/N(6)-methyltransferase family. N(4) subfamily.

It catalyses the reaction a 2'-deoxycytidine in DNA + S-adenosyl-L-methionine = an N(4)-methyl-2'-deoxycytidine in DNA + S-adenosyl-L-homocysteine + H(+). Its function is as follows. A beta subtype methylase, recognizes the double-stranded sequence 5'-CCCGGG-3', methylates C-2 on both strands, and protects the DNA from cleavage by the XcyI endonuclease. This is Type II methyltransferase M.XycI (xcyIM) from Xanthomonas campestris pv. cyanopsidis.